The primary structure comprises 646 residues: Chaperone protein DnaK (646 aa).

Residue Thr-197 is modified to Phosphothreonine; by autocatalysis. The tract at residues 599 to 646 (QQGAQAGADPNAGSSQGAQAGTDYGTSGPKTGTADDVDYEVVNDDNDK) is disordered. A compositionally biased stretch (polar residues) spans 610-628 (AGSSQGAQAGTDYGTSGPK). Over residues 633–646 (DDVDYEVVNDDNDK) the composition is skewed to acidic residues.

Belongs to the heat shock protein 70 family.

Acts as a chaperone. The chain is Chaperone protein DnaK from Treponema denticola (strain ATCC 35405 / DSM 14222 / CIP 103919 / JCM 8153 / KCTC 15104).